A 1015-amino-acid chain; its full sequence is DNA polymerase catalytic subunit (1015 aa).

This sequence belongs to the DNA polymerase type-B family. Forms a complex with the major DNA-binding protein BALF2, the DNA polymerase processivity factor BMRF1, and the alkaline exonuclease BGLF5. Interacts with the putative helicase-primase complex composed of BBLF4, BSLF1 and BBLF2/3 proteins; these interactions may coordinate leading and lagging strand DNA synthesis at the replication fork.

It localises to the host nucleus. It catalyses the reaction DNA(n) + a 2'-deoxyribonucleoside 5'-triphosphate = DNA(n+1) + diphosphate. Its function is as follows. Replicates viral genomic DNA in the late phase of lytic infection, producing long concatemeric DNA. The replication complex is composed of six viral proteins: the DNA polymerase, processivity factor, primase, primase-associated factor, helicase, and ssDNA-binding protein. This chain is DNA polymerase catalytic subunit, found in Homo sapiens (Human).